Reading from the N-terminus, the 124-residue chain is uncharacterized protein (124 aa).

Positions 44-92 (DRVENSGNGTGSISAPLTDLGPSIGDSHENKGADIPIHPPLDTQSHAKD) are disordered. Polar residues predominate over residues 48 to 58 (NSGNGTGSISA).

This is an uncharacterized protein from Caenorhabditis elegans.